The sequence spans 471 residues: UDP-glycosyltransferase 1 (471 aa).

Catalysis depends on His-15, which acts as the Proton acceptor. Residue His-15 coordinates an anthocyanidin. Asp-124 (charge relay) is an active-site residue. 8 residues coordinate UDP-alpha-D-glucose: Thr-146, Ala-348, Gln-350, His-365, Trp-368, Asn-369, Ser-370, and Glu-373. Ala-388 serves as a coordination point for an anthocyanidin. UDP-alpha-D-glucose is bound by residues Glu-389 and Gln-390.

The protein belongs to the UDP-glycosyltransferase family. Expressed in roots. Detected in stems and leaves.

It carries out the reaction a 7-hydroxyisoflavone + UDP-alpha-D-glucose = a 7-hydroxyisoflavone 7-O-beta-D-glucoside + UDP + H(+). Isoflavone 7-O-glucosyltransferase converting daidzein to daidzin, genistein to genistin and formononetin to ononin. Shows some activity toward the chalcone isoliquiritigenin, the flavanones liquiritigenin and naringenin, and the flavone apigenin, but not toward cyanidin, luteolin, kaempferol, quercetin, daidzin and puerarin. The chain is UDP-glycosyltransferase 1 from Pueraria montana var. lobata (Kudzu vine).